A 130-amino-acid polypeptide reads, in one-letter code: Glycine cleavage system H protein (130 aa).

A Lipoyl-binding domain is found at 24–106; it reads EYTVGITEHA…YHEGWLFRIK (83 aa). Lys65 bears the N6-lipoyllysine mark.

It belongs to the GcvH family. The glycine cleavage system is composed of four proteins: P, T, L and H. It depends on (R)-lipoate as a cofactor.

Its function is as follows. The glycine cleavage system catalyzes the degradation of glycine. The H protein shuttles the methylamine group of glycine from the P protein to the T protein. This is Glycine cleavage system H protein from Photorhabdus laumondii subsp. laumondii (strain DSM 15139 / CIP 105565 / TT01) (Photorhabdus luminescens subsp. laumondii).